We begin with the raw amino-acid sequence, 626 residues long: Chaperone protein HtpG (626 aa).

An a; substrate-binding region spans residues 1–339 (MSTNQETRGF…SNDLPLNVSR (339 aa)). Residues 340 to 555 (EILQDNKVTA…NDQMTTQMAK (216 aa)) are b. Positions 556-626 (LFAAAGQPVP…FIKRVNNLLG (71 aa)) are c.

Belongs to the heat shock protein 90 family. Homodimer.

It localises to the cytoplasm. In terms of biological role, molecular chaperone. Has ATPase activity. This is Chaperone protein HtpG from Histophilus somni (strain 2336) (Haemophilus somnus).